A 1172-amino-acid chain; its full sequence is NACHT, LRR and PYD domains-containing protein 1b allele 3 (1172 aa).

The interval 1–22 is disordered; it reads MEESPPKQKSNTKVAQHEGQQD. The NACHT domain maps to 126 to 435; it reads QLVIIEGAAG…EFFAAISCIL (310 aa). ATP is bound at residue 132–139; the sequence is GAAGIGKS. 2 LRR repeats span residues 627-647 and 684-704; these read NLEG…QSLC and SLTE…RMLC. The interval 789–922 is ZU5; sequence FWGPTGPVAT…GYTVLKNPSF (134 aa). In terms of domain architecture, FIIND spans 789-1072; it reads FWGPTGPVAT…LRPALPRIAQ (284 aa). Residues 923–1072 form a UPA region; the sequence is SPMGDVLRII…LRPALPRIAQ (150 aa). The 84-residue stretch at 1082–1165 folds into the CARD domain; sequence HFMDQHREQL…HLVMDLLEKS (84 aa).

Belongs to the NLRP family. In contrast to allele 1 and 2, not able to mediate autocatalytic cleavage. In terms of tissue distribution, expressed in macrophages.

The protein localises to the cytoplasm. It localises to the cytosol. In contrast to allele 1, does not undergo autocatalytic cleavage within the FIIND domain and its mode of activation remains unclear. In contrast to alleles 1 and 2, allele 3 is not activated by Val-boroPro (Talabostat, PT-100). Not activated by cleavage by B.anthracis lethal toxin (LT) endopeptidase. Not activated by metabolic inhibitors, such as 2-deoxy-D-glucose and sodium azide. In terms of biological role, may act as the sensor component of the Nlrp1b inflammasome, which mediates inflammasome activation in response to various pathogen-associated signals, leading to subsequent pyroptosis. Inflammasomes are supramolecular complexes that assemble in the cytosol in response to pathogens and other damage-associated signals and play critical roles in innate immunity and inflammation. May act as a recognition receptor (PRR), which recognizes specific pathogens and other damage-associated signals and forms an inflammasome complex: the inflammasome directly recruits pro-caspase-1 (proCASP1) independently of PYCARD/ASC and promotes caspase-1 (CASP1) activation, which subsequently cleaves and activates inflammatory cytokines IL1B and IL18 and gasdermin-D (GSDMD), leading to pyroptosis. In the absence of GSDMD expression, the Nlrp1b inflammasome is able to recruit and activate CASP8, leading to activation of gasdermin-E (GSDME). Contrary to Nlrp1b allele 1, allele 3 is not activated by Bacillus anthracis lethal toxin. The absence of autocatalytic cleavage within the FIIND domain, which regulates activation in other alleles, suggests that allele 3 may be non-functional. The sequence is that of NACHT, LRR and PYD domains-containing protein 1b allele 3 from Mus musculus (Mouse).